The following is a 406-amino-acid chain: COP9 signalosome complex subunit 4 (406 aa).

A2 bears the N-acetylalanine mark. K25 bears the N6-acetyllysine mark. Positions 197–366 (YRRKFIEAAQ…GIVHFETREA (170 aa)) constitute a PCI domain.

Belongs to the CSN4 family. Component of the CSN complex, composed of COPS1/GPS1, COPS2, COPS3, COPS4, COPS5, COPS6, COPS7 (COPS7A or COPS7B), COPS8 and COPS9. In the complex, it probably interacts directly with COPS1, COPS2, COPS3, COPS5, COPS6, COPS7 (COPS7A or COPS7B) and COPS8. Interacts with TOR1A; the interaction is direct and associates TOR1A and SNAPIN with the CSN complex. Interacts with STON2; controls STON2 neddylation levels. Interacts with ERCC6.

It is found in the cytoplasm. Its subcellular location is the nucleus. It localises to the cytoplasmic vesicle. The protein localises to the secretory vesicle. The protein resides in the synaptic vesicle. Functionally, component of the COP9 signalosome complex (CSN), a complex involved in various cellular and developmental processes. The CSN complex is an essential regulator of the ubiquitin (Ubl) conjugation pathway by mediating the deneddylation of the cullin subunits of SCF-type E3 ligase complexes, leading to decrease the Ubl ligase activity of SCF-type complexes such as SCF, CSA or DDB2. Also involved in the deneddylation of non-cullin subunits such as STON2. The complex is also involved in phosphorylation of p53/TP53, c-jun/JUN, IkappaBalpha/NFKBIA, ITPK1, IRF8/ICSBP and SNAPIN, possibly via its association with CK2 and PKD kinases. CSN-dependent phosphorylation of TP53 and JUN promotes and protects degradation by the Ubl system, respectively. The protein is COP9 signalosome complex subunit 4 (COPS4) of Pongo abelii (Sumatran orangutan).